The chain runs to 424 residues: MSDTNSAWIEQNLQRQRKMLEDKQKQKRHQSAGSVRTTTTTSSMSMNNMKDYPAFETSLPFSMSDHTSNMNTPLIPTPQAPPRNHTLTTRQSSMPATDTLIQINDYPENDISAKLSKVNLTPCVVSDDEDSDRRSYRESPWHNDIVADKIKTDILPDYNYIKNNLQKFVDEPAQEHCLYRCSITRHKSGVDKTMYPTYYLHLEEMDTDKKAKIFLLAARKRKKSTTANYLLSTDPTNLSREGDGYCAKVRSNALGTHFTIYDNGHNPKKTDNQFSIRQELAAVIYETNVLGFKGPRKMTVIMPGIEPGNDSKPAVRCIHRPVLEKHTLLEKNRSGDTNSLKVLTNKSPQWNDETQSYVLNFHGRVTQASVKNFQIIHPNSPEYIVMQFGRVSEDEFTMDFRYPLSAVQAFGIAMTSFHGKLACE.

The segment at Met-19–Asn-47 is disordered. Residues Thr-37–Asn-47 are compositionally biased toward low complexity.

Belongs to the TUB family. As to quaternary structure, interacts with rgb-3.

The protein resides in the cytoplasm. It localises to the cell projection. The protein localises to the axon. It is found in the dendrite. Its subcellular location is the cilium. Has a role in fat regulation independent of daf-16. Implicated in ciliar sensory function which is required for normal sensory behavior such as chemotaxis. Functions in life span control via the insulin/IGF-1 pathway. Thought to be involved in neuronal trafficking. This Caenorhabditis briggsae protein is Tubby protein homolog 1.